A 194-amino-acid chain; its full sequence is dCTP deaminase (194 aa).

Residues 110–115, aspartate 128, 136–138, tyrosine 171, lysine 178, and glutamine 182 each bind dCTP; these read RSSLAR and VLE. Glutamate 138 serves as the catalytic Proton donor/acceptor. Residues 173-194 form a disordered region; sequence SRQDAKYKNQQSAVASRINQDR. Over residues 180–194 the composition is skewed to polar residues; sequence KNQQSAVASRINQDR.

This sequence belongs to the dCTP deaminase family. As to quaternary structure, homotrimer.

It catalyses the reaction dCTP + H2O + H(+) = dUTP + NH4(+). It functions in the pathway pyrimidine metabolism; dUMP biosynthesis; dUMP from dCTP (dUTP route): step 1/2. Its function is as follows. Catalyzes the deamination of dCTP to dUTP. The polypeptide is dCTP deaminase (Actinobacillus succinogenes (strain ATCC 55618 / DSM 22257 / CCUG 43843 / 130Z)).